Reading from the N-terminus, the 101-residue chain is Replication restart protein PriB (101 aa).

An SSB domain is found at 1 to 101 (MTTNNLVLAG…LHAENVELKT (101 aa)).

It belongs to the PriB family. Homodimer. Interacts with PriA and DnaT. Component of the replication restart primosome. Primosome assembly occurs via a 'hand-off' mechanism. PriA binds to replication forks, subsequently PriB then DnaT bind; DnaT then displaces ssDNA to generate the helicase loading substrate.

Functionally, involved in the restart of stalled replication forks, which reloads the replicative helicase on sites other than the origin of replication; the PriA-PriB pathway is the major replication restart pathway. During primosome assembly it facilitates complex formation between PriA and DnaT on DNA; stabilizes PriA on DNA. Stimulates the DNA unwinding activity of PriA helicase. This is Replication restart protein PriB from Shewanella piezotolerans (strain WP3 / JCM 13877).